A 56-amino-acid polypeptide reads, in one-letter code: Photosystem II reaction center protein K (56 aa).

The propeptide occupies 1–19; it reads MLNFLLQNTFVLWSNFILC. The chain crosses the membrane as a helical span at residues 35 to 55; it reads MPVIPVFFFLLAFVWQAAVSF.

Belongs to the PsbK family. PSII is composed of 1 copy each of membrane proteins PsbA, PsbB, PsbC, PsbD, PsbE, PsbF, PsbH, PsbI, PsbJ, PsbK, PsbL, PsbM, PsbT, PsbX, PsbY, PsbZ, Psb30/Ycf12, at least 3 peripheral proteins of the oxygen-evolving complex and a large number of cofactors. It forms dimeric complexes.

Its subcellular location is the plastid. It localises to the chloroplast thylakoid membrane. In terms of biological role, one of the components of the core complex of photosystem II (PSII). PSII is a light-driven water:plastoquinone oxidoreductase that uses light energy to abstract electrons from H(2)O, generating O(2) and a proton gradient subsequently used for ATP formation. It consists of a core antenna complex that captures photons, and an electron transfer chain that converts photonic excitation into a charge separation. This Welwitschia mirabilis (Tree tumbo) protein is Photosystem II reaction center protein K.